The following is a 121-amino-acid chain: Regulator of ribonuclease activity B (121 aa).

The protein belongs to the RraB family. In terms of assembly, interacts with the C-terminal region of Rne.

Its subcellular location is the cytoplasm. Its function is as follows. Globally modulates RNA abundance by binding to RNase E (Rne) and regulating its endonucleolytic activity. Can modulate Rne action in a substrate-dependent manner by altering the composition of the degradosome. The polypeptide is Regulator of ribonuclease activity B (Psychromonas ingrahamii (strain DSM 17664 / CCUG 51855 / 37)).